Consider the following 256-residue polypeptide: POU domain class 2-associating factor 1 (256 aa).

Residues 1–24 (MLWQKSTAPEQAPAPPRPYQGVRV) are disordered. An OCA domain is found at 16–38 (PRPYQGVRVKEPVKELLRRKRGH).

This sequence belongs to the POU2AF family. In terms of assembly, interacts with POU2F1/OCT1 and POU2F2/OCT2; the interaction increases POU2F1 and POU2F2 transactivation activity. Ubiquitinated; mediated by SIAH1 or SIAH2 and leading to its subsequent proteasomal degradation. As to expression, B-cell specific.

It localises to the nucleus. Transcriptional coactivator that specifically associates with either POU2F1/OCT1 or POU2F2/OCT2. It boosts the POU2F1/OCT1 mediated promoter activity and to a lesser extent, that of POU2F2/OCT2. It recognizes the POU domains of POU2F1/OCT1 and POU2F2/OCT2. It is essential for the response of B-cells to antigens and required for the formation of germinal centers. Regulates IL6 expression in B cells as POU2F2/OCT2 coactivator. The polypeptide is POU domain class 2-associating factor 1 (Mus musculus (Mouse)).